Here is a 355-residue protein sequence, read N- to C-terminus: UDP-N-acetylglucosamine--N-acetylmuramyl-(pentapeptide) pyrophosphoryl-undecaprenol N-acetylglucosamine transferase (355 aa).

Residues 15–17, Asn-127, Arg-163, Ser-191, Ile-244, 263–268, and Gln-288 each bind UDP-N-acetyl-alpha-D-glucosamine; these read TGG and ALTVSE.

This sequence belongs to the glycosyltransferase 28 family. MurG subfamily.

It localises to the cell inner membrane. It catalyses the reaction di-trans,octa-cis-undecaprenyl diphospho-N-acetyl-alpha-D-muramoyl-L-alanyl-D-glutamyl-meso-2,6-diaminopimeloyl-D-alanyl-D-alanine + UDP-N-acetyl-alpha-D-glucosamine = di-trans,octa-cis-undecaprenyl diphospho-[N-acetyl-alpha-D-glucosaminyl-(1-&gt;4)]-N-acetyl-alpha-D-muramoyl-L-alanyl-D-glutamyl-meso-2,6-diaminopimeloyl-D-alanyl-D-alanine + UDP + H(+). The protein operates within cell wall biogenesis; peptidoglycan biosynthesis. In terms of biological role, cell wall formation. Catalyzes the transfer of a GlcNAc subunit on undecaprenyl-pyrophosphoryl-MurNAc-pentapeptide (lipid intermediate I) to form undecaprenyl-pyrophosphoryl-MurNAc-(pentapeptide)GlcNAc (lipid intermediate II). The polypeptide is UDP-N-acetylglucosamine--N-acetylmuramyl-(pentapeptide) pyrophosphoryl-undecaprenol N-acetylglucosamine transferase (Escherichia coli O9:H4 (strain HS)).